The following is a 736-amino-acid chain: Microtubule-associated protein mu-2 (736 aa).

Belongs to the orthoreovirus mu-2 protein family. In terms of assembly, interacts with protein mu-NS; in viral inclusions. Interacts with polymerase lambda-3; this interaction stimulates the ATPase activity of mu-2. It depends on a divalent metal cation as a cofactor.

The protein resides in the virion. It is found in the host cytoplasm. It localises to the host cytoskeleton. In terms of biological role, minor inner capsid (core) component. Displays NTPase and RNA 5'-triphosphatase (RTPase) activities. ATP is the preferred substrate for hydrolysis. May function as a cofactor of polymerase lambda-3. Associates with microtubules and plays a role in the formation, structural organization and morphology of viral inclusions, where the assembly of cores and the replication of viral RNA occur. Together with mu-NS, recruits the other core proteins to these inclusions. This is Microtubule-associated protein mu-2 (M1) from Mammalia (T1L).